Consider the following 104-residue polypeptide: Iron-sulfur cluster assembly protein CyaY (104 aa).

This sequence belongs to the frataxin family.

Functionally, involved in iron-sulfur (Fe-S) cluster assembly. May act as a regulator of Fe-S biogenesis. In Rickettsia prowazekii (strain Madrid E), this protein is Iron-sulfur cluster assembly protein CyaY.